The chain runs to 953 residues: Isoleucine--tRNA ligase (953 aa).

The 'HIGH' region signature appears at 57–67 (PYANGDIHIGH). Residue E582 participates in L-isoleucyl-5'-AMP binding. The 'KMSKS' region motif lies at 623–627 (KMSKS). K626 serves as a coordination point for ATP. Zn(2+) is bound by residues C916, C919, C936, and C939.

Belongs to the class-I aminoacyl-tRNA synthetase family. IleS type 1 subfamily. In terms of assembly, monomer. It depends on Zn(2+) as a cofactor.

Its subcellular location is the cytoplasm. It carries out the reaction tRNA(Ile) + L-isoleucine + ATP = L-isoleucyl-tRNA(Ile) + AMP + diphosphate. Catalyzes the attachment of isoleucine to tRNA(Ile). As IleRS can inadvertently accommodate and process structurally similar amino acids such as valine, to avoid such errors it has two additional distinct tRNA(Ile)-dependent editing activities. One activity is designated as 'pretransfer' editing and involves the hydrolysis of activated Val-AMP. The other activity is designated 'posttransfer' editing and involves deacylation of mischarged Val-tRNA(Ile). This chain is Isoleucine--tRNA ligase, found in Bordetella bronchiseptica (strain ATCC BAA-588 / NCTC 13252 / RB50) (Alcaligenes bronchisepticus).